The primary structure comprises 350 residues: Dauer larva development regulatory growth factor daf-7 (350 aa).

A signal peptide spans 1 to 21 (MFMASSLPVFIFLLSLPHGLT). A propeptide spanning residues 22 to 234 (FNCTNSGVCI…TRPKGSRKRR (213 aa)) is cleaved from the precursor. Asparagine 23 carries N-linked (GlcNAc...) asparagine glycosylation. 4 disulfide bridges follow: cysteine 241–cysteine 251, cysteine 250–cysteine 315, cysteine 278–cysteine 347, and cysteine 282–cysteine 349.

It belongs to the TGF-beta family. In terms of tissue distribution, expressed in the chemosensory neurons, including in the ASJ neurons in males. Expressed in the ASI neurons.

It localises to the secreted. Under harsh environmental conditions, larvae enter a developmentally arrested state known as dauer; TGF-beta-like daf-7 acts to inhibit dauer larva formation and promote growth. May be a ligand to cell surface receptor daf-4. May act as a negative regulator of dauer larva development by transducing chemosensory information from ASI neurons. Involved in sensitivity to CO2 levels. Involved in mate searching behavior of males, acting in concert with the neuropeptide pdf-1. In AWC neurons, acts to promote expression of srsx-3, a member of the GPCR family. The chain is Dauer larva development regulatory growth factor daf-7 from Caenorhabditis elegans.